The following is a 572-amino-acid chain: Hsp70-Hsp90 organizing protein 1 (572 aa).

TPR repeat units lie at residues 2–35 (AEEA…APTN), 37–69 (VLFS…KPYW), and 70–103 (PKGY…DPTN). Positions 133 to 172 (GPEMWTKLTSDPSTRGFLQQPDFVNMMQEIQKNPSSLNLY) constitute an STI1 1 domain. Ser-167 bears the Phosphoserine mark. Residues 189–248 (KFRPPPPQGDEAEVPESDMGQSSSNEPEVEKKREPEPEPEPEVTEEKEKKERKEKAKKEK) are disordered. Over residues 232–248 (TEEKEKKERKEKAKKEK) the composition is skewed to basic and acidic residues. A Bipartite nuclear localization signal motif is present at residues 241–258 (KEKAKKEKELGNAAYKKK). TPR repeat units lie at residues 244–277 (AKKE…DDED), 279–311 (SYLT…GREL), 319–356 (ARAL…HRNP), 358–382 (TLKR…DPKL), 383–416 (GDEE…NPND), 418–450 (KAYS…DPTF), and 451–484 (SKGY…DPSN). One can recognise an STI1 2 domain in the interval 521-560 (DPEIQNILTDPVMRQVLSDLQENPSAAQKHMQNPMVMNKI).

Co-chaperone that forms a complex with HSP70 and HSP90 and preproteins (e.g. chloroplast preproteins). Phosphorylated. Post-translationally, acetylated.

Its subcellular location is the cytoplasm. The protein localises to the nucleus. In terms of biological role, mediates the association of the molecular chaperones HSP70 and HSP90. Mediates nuclear encoded chloroplast preproteins binding to HSP90 prior to chloroplastic sorting. The sequence is that of Hsp70-Hsp90 organizing protein 1 (HOP1) from Arabidopsis thaliana (Mouse-ear cress).